A 376-amino-acid chain; its full sequence is Actin-related protein T1 (376 aa).

This sequence belongs to the actin family.

Its subcellular location is the cytoplasm. It is found in the cytoskeleton. The protein resides in the nucleus. It localises to the cytoplasmic vesicle. The protein localises to the secretory vesicle. Its subcellular location is the acrosome. Functionally, negatively regulates the Hedgehog (SHH) signaling. Binds to the promoter of the SHH signaling mediator, GLI1, and inhibits its expression. In Mus musculus (Mouse), this protein is Actin-related protein T1 (Actrt1).